The chain runs to 435 residues: Matrix remodeling-associated protein 8 (435 aa).

Positions 1-22 are cleaved as a signal peptide; that stretch reads MEIRCKVLVCHIILLHSATVYL. Residues 23 to 337 lie on the Extracellular side of the membrane; the sequence is YSVPASQQNP…QESRLHFFQQ (315 aa). Ig-like V-type domains are found at residues 32–158 and 156–293; these read PESV…LNIT and NITK…LSVS. N-linked (GlcNAc...) asparagine glycans are attached at residues asparagine 41, asparagine 120, asparagine 156, asparagine 245, and asparagine 324. An intrachain disulfide couples cysteine 54 to cysteine 138. Cysteine 187 and cysteine 273 form a disulfide bridge. Residues 338-358 traverse the membrane as a helical segment; it reads LGYILATLLLFILLLTAVILI. Residues 359–435 lie on the Cytoplasmic side of the membrane; it reads TRKHQKRGYA…DLELRKEYCK (77 aa).

Homodimer in cis. Does not appear to form trans-homodimers.

It is found in the cell membrane. Functionally, transmembrane protein which can modulate activity of various signaling pathways, probably via binding to integrin ITGAV:ITGB3. Mediates heterophilic cell-cell interactions in vitro. This chain is Matrix remodeling-associated protein 8 (mxra8), found in Xenopus laevis (African clawed frog).